The chain runs to 417 residues: MELEKRLKEKLEAPTLDYEKYFSEKALGMKASEIRELLKLVETSDVISLAGGLPAPETFPVEIIGEITKEVLEKHAAQALQYGTTKGFTPLRLALAEWMRERYDIPISKVDIMTTSGSQQALDLIGRVFINPGDIIVVEAPTYLAALQAFKYYEPEFVQIPLDDEGMNVDLLEEKLQELEKEGKKVKIVYTIPTFQNPAGVTMNEKRRKRLLELASQYDFIIVEDNPYGELRYSGEPVKPIKAWDEEGRVIYLGTFSKILAPGFRIGWIAAEPHFIRKLEIAKQSVDLCTNTFSQVIAWKYVEGGYLDKHIPKIIEFYKPRRDAMLKALEEFMPDGVKWTKPEGGMFVWATLPEGIDTKLMLEKAVAKGVAYVPGEAFFAHRDVKNTMRLNFTYVPEEKIREGIKRLAETIKEEMKK.

An N6-(pyridoxal phosphate)lysine modification is found at Lys258.

Belongs to the class-I pyridoxal-phosphate-dependent aminotransferase family. In terms of assembly, homodimer. Requires pyridoxal 5'-phosphate as cofactor.

It catalyses the reaction an aromatic L-alpha-amino acid + 2-oxoglutarate = an aromatic oxo-acid + L-glutamate. Its function is as follows. Catalyzes the transamination of phenylalanine, tyrosine and tryptophan. Shows virtually no activity towards aspartic acid, alanine, valine or isoleucine. The sequence is that of Aromatic-amino-acid aminotransferase 1 from Thermococcus litoralis (strain ATCC 51850 / DSM 5473 / JCM 8560 / NS-C).